The chain runs to 258 residues: Fibroblast growth factor-binding protein 3 (258 aa).

An N-terminal signal peptide occupies residues 1 to 26 (MTPPKLRASLSPSLLLLLSGCLLAAA). Disulfide bonds link cysteine 59/cysteine 80 and cysteine 90/cysteine 124. Residues 146 to 231 (RLVPRASPPA…GTGPDPDGLD (86 aa)) are disordered. Residues 186–197 (GTPPPQSAPPKE) show a composition bias toward pro residues. Positions 198 to 209 (NPSERKTNEGKR) are enriched in basic and acidic residues. Cysteine 241 and cysteine 249 are oxidised to a cystine.

It belongs to the fibroblast growth factor-binding protein family. As to quaternary structure, interacts with FGF2.

The protein localises to the secreted. Functionally, heparin-binding protein which binds to FGF2, prevents binding of FGF2 to heparin and probably inhibits immobilization of FGF2 on extracellular matrix glycosaminoglycans, allowing its release and subsequent activation of FGFR signaling which leads to increased vascular permeability. The chain is Fibroblast growth factor-binding protein 3 (FGFBP3) from Homo sapiens (Human).